Reading from the N-terminus, the 475-residue chain is Cytosolic non-specific dipeptidase (475 aa).

K9 is subject to N6-acetyllysine. Residue S58 is modified to Phosphoserine. H99 contributes to the Mn(2+) binding site. D101 is an active-site residue. D132 contacts Mn(2+). E166 serves as the catalytic Proton acceptor. Residues 166–167 (EE), D195, H228, T330, R343, S417, and H445 contribute to the substrate site. Mn(2+) is bound by residues E167 and D195. H445 provides a ligand contact to Mn(2+).

This sequence belongs to the peptidase M20A family. In terms of assembly, homodimer. The cofactor is Mn(2+).

It is found in the cytoplasm. The catalysed reaction is Hydrolysis of dipeptides, preferentially hydrophobic dipeptides including prolyl amino acids.. The enzyme catalyses L-threonyl-L-threonine + H2O = 2 L-threonine. It catalyses the reaction L-threonyl-L-serine + H2O = L-threonine + L-serine. It carries out the reaction L-seryl-L-threonine + H2O = L-threonine + L-serine. The catalysed reaction is L-cysteinylglycine + H2O = L-cysteine + glycine. The enzyme catalyses L-alanyl-L-cysteine + H2O = L-cysteine + L-alanine. It catalyses the reaction (S)-lactate + L-phenylalanine = N-[(S)-lactoyl]-L-phenylalanine + H2O. In terms of biological role, catalyzes the peptide bond hydrolysis in dipeptides, displaying a non-redundant activity toward threonyl dipeptides. Mediates threonyl dipeptide catabolism in a tissue-specific way. Has high dipeptidase activity toward cysteinylglycine, an intermediate metabolite in glutathione metabolism. Metabolizes N-lactoyl-amino acids, both through hydrolysis to form lactic acid and amino acids, as well as through their formation by reverse proteolysis. Plays a role in the regulation of cell cycle arrest and apoptosis. The chain is Cytosolic non-specific dipeptidase (CNDP2) from Bos taurus (Bovine).